Consider the following 416-residue polypeptide: 3-oxoacyl-[acyl-carrier-protein] synthase 1 (416 aa).

The 405-residue stretch at Phe-11–Arg-415 folds into the Ketosynthase family 3 (KS3) domain. Catalysis depends on for beta-ketoacyl synthase activity residues Cys-171, His-311, and His-345. Substrate-binding residues include His-311 and His-345.

This sequence belongs to the thiolase-like superfamily. Beta-ketoacyl-ACP synthases family.

Its subcellular location is the cytoplasm. It catalyses the reaction an ultra-long-chain mono-unsaturated fatty acyl-[ACP] + malonyl-[ACP] + H(+) = a 3-oxo-ultra-long-chain mono-unsaturated fatty acyl-[ACP] + holo-[ACP] + CO2. The protein operates within lipid metabolism; mycolic acid biosynthesis. Functionally, part of the mycobacterial fatty acid elongation system FAS-II, which is involved in mycolic acid biosynthesis. Catalyzes the elongation of long chain acyl-ACP substrates by the addition of two carbons from malonyl-ACP to an acyl acceptor. Involved in the initial extension of the mycolate chain and forms monounsaturated fatty acids that averaged 40 carbons in length. This chain is 3-oxoacyl-[acyl-carrier-protein] synthase 1 (kasA), found in Mycobacterium leprae (strain TN).